A 164-amino-acid polypeptide reads, in one-letter code: Nucleotide-binding protein Acid345_2028 (164 aa).

The protein belongs to the YajQ family.

Functionally, nucleotide-binding protein. This is Nucleotide-binding protein Acid345_2028 from Koribacter versatilis (strain Ellin345).